The sequence spans 240 residues: MKPAYFISDLHLSEKHPELTALLLRFLRSSAAGQARAVYILGDLFDFWVGDDEVSELNTSVAREIRKLSDKGVAVFFVRGNRDFLIGQDFCRQAGMTLLPDYSVLDLFGCKTLICHGDTLCTDDRAYQRFRKIVHRKRLQKLFLMLPLKWRTRLATKIRRVSKMEKQVKPADIMDVNAAFTARQVRAFGAERLIHGHTHREHIHHENGFTRIVLGDWHNDYASILRVDGDGAVFVPLEKY.

The Mn(2+) site is built by aspartate 9, histidine 11, aspartate 43, asparagine 81, and histidine 116. 81 to 82 (NR) contacts substrate. Substrate-binding residues include aspartate 124, serine 162, lysine 166, lysine 169, and histidine 197. Positions 197 and 199 each coordinate Mn(2+).

The protein belongs to the LpxH family. Mn(2+) is required as a cofactor.

It localises to the cell inner membrane. It carries out the reaction UDP-2-N,3-O-bis[(3R)-3-hydroxytetradecanoyl]-alpha-D-glucosamine + H2O = 2-N,3-O-bis[(3R)-3-hydroxytetradecanoyl]-alpha-D-glucosaminyl 1-phosphate + UMP + 2 H(+). Its pathway is glycolipid biosynthesis; lipid IV(A) biosynthesis; lipid IV(A) from (3R)-3-hydroxytetradecanoyl-[acyl-carrier-protein] and UDP-N-acetyl-alpha-D-glucosamine: step 4/6. In terms of biological role, hydrolyzes the pyrophosphate bond of UDP-2,3-diacylglucosamine to yield 2,3-diacylglucosamine 1-phosphate (lipid X) and UMP by catalyzing the attack of water at the alpha-P atom. Involved in the biosynthesis of lipid A, a phosphorylated glycolipid that anchors the lipopolysaccharide to the outer membrane of the cell. The protein is UDP-2,3-diacylglucosamine hydrolase of Neisseria meningitidis serogroup C / serotype 2a (strain ATCC 700532 / DSM 15464 / FAM18).